The chain runs to 164 residues: Lipoprotein signal peptidase (164 aa).

2 consecutive transmembrane segments (helical) span residues 68–88 and 96–116; these read TILV…LWNA and FWGL…RAMF. Catalysis depends on residues Asp-121 and Asp-139. A helical transmembrane segment spans residues 134–154; the sequence is TFNVADSAIVVGSCLLLIDLL.

The protein belongs to the peptidase A8 family.

The protein localises to the cell inner membrane. It catalyses the reaction Release of signal peptides from bacterial membrane prolipoproteins. Hydrolyzes -Xaa-Yaa-Zaa-|-(S,diacylglyceryl)Cys-, in which Xaa is hydrophobic (preferably Leu), and Yaa (Ala or Ser) and Zaa (Gly or Ala) have small, neutral side chains.. It participates in protein modification; lipoprotein biosynthesis (signal peptide cleavage). In terms of biological role, this protein specifically catalyzes the removal of signal peptides from prolipoproteins. The sequence is that of Lipoprotein signal peptidase from Solibacter usitatus (strain Ellin6076).